The primary structure comprises 675 residues: L-type lectin-domain containing receptor kinase IV.1 (675 aa).

The N-terminal stretch at 1-22 (MFLKLLTIFFFFFFNLIFQSSS) is a signal peptide. Over 23–291 (QSLNFAYNNG…EPKRISEFYK (269 aa)) the chain is Extracellular. The tract at residues 25–261 (LNFAYNNGFN…SEHYILGWSF (237 aa)) is legume-lectin like. N-linked (GlcNAc...) asparagine glycans are attached at residues Asn-57, Asn-79, Asn-112, Asn-134, Asn-153, and Asn-186. The helical transmembrane segment at 292–312 (IGMPLISLFLIFSFIFLVCYI) threads the bilayer. Residues 313–675 (VRRRRKFAEE…IADSQLSGGR (363 aa)) are Cytoplasmic-facing. One can recognise a Protein kinase domain in the interval 347-624 (FKEKGLLGTG…LHYLRGDAKL (278 aa)). ATP is bound by residues 353 to 361 (LGTGGFGSV) and Lys-376. Catalysis depends on Asp-472, which acts as the Proton acceptor.

In the C-terminal section; belongs to the protein kinase superfamily. Ser/Thr protein kinase family. The protein in the N-terminal section; belongs to the leguminous lectin family.

Its subcellular location is the membrane. The catalysed reaction is L-seryl-[protein] + ATP = O-phospho-L-seryl-[protein] + ADP + H(+). It catalyses the reaction L-threonyl-[protein] + ATP = O-phospho-L-threonyl-[protein] + ADP + H(+). The polypeptide is L-type lectin-domain containing receptor kinase IV.1 (LECRK41) (Arabidopsis thaliana (Mouse-ear cress)).